We begin with the raw amino-acid sequence, 143 residues long: MGLMKKFRDYFLEEDYEDYEEEYEAPQQEEEALPLKTANKTNVVSLQSVQKSAKVVLAEPRVYAEAQEIADHLKSRRAVIVNLQRIQHEQAKRIVDFLSGTVYAIGGDIQQVGTKIFLCTPENVDVSGAISLDGEDDRPMKRW.

Belongs to the SepF family. As to quaternary structure, homodimer. Interacts with FtsZ.

It localises to the cytoplasm. Its function is as follows. Cell division protein that is part of the divisome complex and is recruited early to the Z-ring. Probably stimulates Z-ring formation, perhaps through the cross-linking of FtsZ protofilaments. Its function overlaps with FtsA. The polypeptide is Cell division protein SepF (Geobacillus thermodenitrificans (strain NG80-2)).